The chain runs to 76 residues: Kappa-actitoxin-Avd4a (76 aa).

The signal sequence occupies residues Met-1–Ala-19. A propeptide spanning residues Ala-20–Phe-31 is cleaved from the precursor. 3 disulfides stabilise this stretch: Cys-37–Cys-72, Cys-39–Cys-65, and Cys-55–Cys-73.

Belongs to the sea anemone type 3 (BDS) potassium channel toxin family. Highly expressed in the ectodermal tissue from the distal and proximal tentacles, body wall, and oral disk.

The protein localises to the secreted. Its subcellular location is the nematocyst. In terms of biological role, acts as a gating modifier on both Kv and Nav ion channels, and also acts on blood pressure. Voltage-dependently inhibits voltage-gated potassium channels Kv3 (Kv3.1/KCNC1, Kv3.2/KCNC2 and Kv3.4/KCNC4) and slows inactivation of the voltage-gated sodium channel Nav1.7/SCN9A. Inhibits all Kv3.1, Kv3.2 and Kv3.4 by about 50% when tested at a voltage of +40 mV (45%, 48% and 56%, respectively). May act by binding residues in voltage-sensing domains S3b and S4 of Kv3. On sodium channels, tests have been done on human Nav1.7/SCN9A (expressed in HEK293 cells) (EC(50)=3 nM) and rat SCG neurons that mostly carry Nav1.7 channels (EC(50)=300 nM). This toxin also reduces blood pressure. This Anemonia viridis (Snakelocks anemone) protein is Kappa-actitoxin-Avd4a.